Consider the following 228-residue polypeptide: MTEYLLSAGICMAIVSILLIGMAISNVSKGQYAKRFFFFATSCLVLTLVVVSSLSSSANASQTDNGVNRSGSEHPTVYSATSTKKLHKEPATLIKAIDGDTVKLMYKGQPMTFRLLLVDTPETKHPKKGVEKYGPEASAFTKKMVENAKKIEVEFDKGQRTDKYGRGLAYIYADGKMVNEALVRQGLAKVAYVYKPNNTHEQLLRKSEAQAKKEKLNIWSEDNADSGQ.

Positions 1 to 23 (MTEYLLSAGICMAIVSILLIGMA) are cleaved as a signal peptide. The propeptide occupies 24–60 (ISNVSKGQYAKRFFFFATSCLVLTLVVVSSLSSSANA). Asp-100 contacts Ca(2+). Residue Arg-114 is part of the active site. Residues Asp-119 and Thr-120 each contribute to the Ca(2+) site. Residues Glu-122 and Arg-166 contribute to the active site.

Belongs to the thermonuclease family. Ca(2+) is required as a cofactor.

The protein localises to the secreted. The catalysed reaction is Endonucleolytic cleavage to nucleoside 3'-phosphates and 3'-phosphooligonucleotide end-products.. In terms of biological role, enzyme that catalyzes the hydrolysis of both DNA and RNA at the 5' position of the phosphodiester bond. This Staphylococcus aureus (strain MSSA476) protein is Thermonuclease (nuc).